A 269-amino-acid chain; its full sequence is Regulating synaptic membrane exocytosis protein 4 (269 aa).

The region spanning 115–233 is the C2 domain; that stretch reads PMGGVEIGLQ…DLTTLAVGWY (119 aa). Phosphoserine is present on residues Ser254 and Ser257.

As to quaternary structure, binds PPFIA3. In terms of tissue distribution, brain specific.

It is found in the synapse. Functionally, regulates synaptic membrane exocytosis. The protein is Regulating synaptic membrane exocytosis protein 4 (Rims4) of Rattus norvegicus (Rat).